An 86-amino-acid chain; its full sequence is Small ribosomal subunit protein bS20 (86 aa).

Positions 1–22 (MANIKSAKKRAVQSEKRRKHNA) are enriched in basic residues. Residues 1-28 (MANIKSAKKRAVQSEKRRKHNASGRSMM) form a disordered region.

Belongs to the bacterial ribosomal protein bS20 family.

Its function is as follows. Binds directly to 16S ribosomal RNA. The polypeptide is Small ribosomal subunit protein bS20 (Serratia proteamaculans (strain 568)).